A 264-amino-acid chain; its full sequence is Acetyl-coenzyme A carboxylase carboxyl transferase subunit beta (264 aa).

The region spanning 4 to 264 (LWVKCKQCQQ…CGNSLEGVES (261 aa)) is the CoA carboxyltransferase N-terminal domain. Zn(2+)-binding residues include Cys-8, Cys-11, Cys-27, and Cys-29. Residues 8–29 (CKQCQQILLTKELEKNLKVCRC) form a C4-type zinc finger.

It belongs to the AccD/PCCB family. As to quaternary structure, acetyl-CoA carboxylase is a heterohexamer composed of biotin carboxyl carrier protein (AccB), biotin carboxylase (AccC) and two subunits each of ACCase subunit alpha (AccA) and ACCase subunit beta (AccD). Zn(2+) serves as cofactor.

The protein localises to the cytoplasm. The enzyme catalyses N(6)-carboxybiotinyl-L-lysyl-[protein] + acetyl-CoA = N(6)-biotinyl-L-lysyl-[protein] + malonyl-CoA. It functions in the pathway lipid metabolism; malonyl-CoA biosynthesis; malonyl-CoA from acetyl-CoA: step 1/1. In terms of biological role, component of the acetyl coenzyme A carboxylase (ACC) complex. Biotin carboxylase (BC) catalyzes the carboxylation of biotin on its carrier protein (BCCP) and then the CO(2) group is transferred by the transcarboxylase to acetyl-CoA to form malonyl-CoA. The sequence is that of Acetyl-coenzyme A carboxylase carboxyl transferase subunit beta from Heliobacterium modesticaldum (strain ATCC 51547 / Ice1).